The primary structure comprises 480 residues: Glutamyl-tRNA(Gln) amidotransferase subunit A (480 aa).

Active-site charge relay system residues include lysine 76 and serine 151. The active-site Acyl-ester intermediate is the serine 175.

The protein belongs to the amidase family. GatA subfamily. As to quaternary structure, heterotrimer of A, B and C subunits.

The catalysed reaction is L-glutamyl-tRNA(Gln) + L-glutamine + ATP + H2O = L-glutaminyl-tRNA(Gln) + L-glutamate + ADP + phosphate + H(+). In terms of biological role, allows the formation of correctly charged Gln-tRNA(Gln) through the transamidation of misacylated Glu-tRNA(Gln) in organisms which lack glutaminyl-tRNA synthetase. The reaction takes place in the presence of glutamine and ATP through an activated gamma-phospho-Glu-tRNA(Gln). In Exiguobacterium sibiricum (strain DSM 17290 / CCUG 55495 / CIP 109462 / JCM 13490 / 255-15), this protein is Glutamyl-tRNA(Gln) amidotransferase subunit A.